A 215-amino-acid chain; its full sequence is Sodium channel regulatory subunit beta-3 (215 aa).

The N-terminal stretch at 1–24 (MPAFNRLLPLASLVLIYWVRVCFP) is a signal peptide. The Ig-like C2-type domain maps to 25–138 (VCVEVPSETE…EAHRPFVKTT (114 aa)). The Extracellular segment spans residues 25-156 (VCVEVPSETE…EEAGEDFTSV (132 aa)). 2 cysteine pairs are disulfide-bonded: Cys26-Cys48 and Cys45-Cys120. 4 N-linked (GlcNAc...) asparagine glycosylation sites follow: Asn95, Asn109, Asn113, and Asn121. The chain crosses the membrane as a helical span at residues 157-178 (VSEIMMYILLVFLTLWLFIEMI). Residues 179–215 (YCYRKVSKAEEAAQENASDYLAIPSENKENSVVPVEE) lie on the Cytoplasmic side of the membrane.

Belongs to the sodium channel auxiliary subunit SCN3B (TC 8.A.17) family. As to quaternary structure, a voltage-gated sodium (Nav) channel consists of an ion-conducting pore-forming alpha subunit functional on its own that is regulated by one or more beta subunits. Forms homodimers and homotrimers. SCN3B is non-covalently associated with alpha subunits and induces the formation of alpha subunit oligomers, including trimers. Interacts with SCN5A/Nav1.5; regulatory subunit of SCN5A/Nav1.5. Interacts with SCN7A/Nav2.1; probable regulatory subunit of SCN7A/Nav2.1. Interacts with SCN10A; regulatory subunit of SCN10A/Nav1.8. Interacts with NFASC; probably involved in targeting the sodium channels to the nodes of Ranvier. In terms of processing, intramolecular disulfide bonds favor the voltage-gated sodium channel oligomeric complex assembly. Post-translationally, N-glycosylated.

It localises to the cell membrane. Functionally, regulatory subunit of multiple voltage-gated sodium (Nav) channels directly mediating the depolarization of excitable membranes. Navs, also called VGSCs (voltage-gated sodium channels) or VDSCs (voltage-dependent sodium channels), operate by switching between closed and open conformations depending on the voltage difference across the membrane. In the open conformation they allow Na(+) ions to selectively pass through the pore, along their electrochemical gradient. The influx of Na+ ions provokes membrane depolarization, initiating the propagation of electrical signals throughout cells and tissues. The accessory beta subunits participate in localization and functional modulation of the Nav channels. Modulates the activity of SCN2A/Nav1.2, causing a hyperpolarizing shift in the voltage-dependence of inactivation of the channel and increasing the fraction of channels operating in the fast gating mode. Modulates the activity of SCN5A/Nav1.5. Could also regulate the atypical sodium channel SCN7A/Nav2.1. Modulates the activity of SCN10A/Nav1.8, regulating its oligomerization and accelerating the recovery from inactivation. The protein is Sodium channel regulatory subunit beta-3 of Mus musculus (Mouse).